Reading from the N-terminus, the 273-residue chain is Formamidopyrimidine-DNA glycosylase (273 aa).

Proline 2 functions as the Schiff-base intermediate with DNA in the catalytic mechanism. The Proton donor role is filled by glutamate 3. Catalysis depends on lysine 58, which acts as the Proton donor; for beta-elimination activity. Histidine 91, arginine 110, and arginine 153 together coordinate DNA. The FPG-type zinc finger occupies lysine 238–lysine 272. The active-site Proton donor; for delta-elimination activity is the arginine 262.

The protein belongs to the FPG family. In terms of assembly, monomer. Requires Zn(2+) as cofactor.

The catalysed reaction is Hydrolysis of DNA containing ring-opened 7-methylguanine residues, releasing 2,6-diamino-4-hydroxy-5-(N-methyl)formamidopyrimidine.. It catalyses the reaction 2'-deoxyribonucleotide-(2'-deoxyribose 5'-phosphate)-2'-deoxyribonucleotide-DNA = a 3'-end 2'-deoxyribonucleotide-(2,3-dehydro-2,3-deoxyribose 5'-phosphate)-DNA + a 5'-end 5'-phospho-2'-deoxyribonucleoside-DNA + H(+). In terms of biological role, involved in base excision repair of DNA damaged by oxidation or by mutagenic agents. Acts as a DNA glycosylase that recognizes and removes damaged bases. Has a preference for oxidized purines, such as 7,8-dihydro-8-oxoguanine (8-oxoG). Has AP (apurinic/apyrimidinic) lyase activity and introduces nicks in the DNA strand. Cleaves the DNA backbone by beta-delta elimination to generate a single-strand break at the site of the removed base with both 3'- and 5'-phosphates. The sequence is that of Formamidopyrimidine-DNA glycosylase from Lactobacillus delbrueckii subsp. bulgaricus (strain ATCC 11842 / DSM 20081 / BCRC 10696 / JCM 1002 / NBRC 13953 / NCIMB 11778 / NCTC 12712 / WDCM 00102 / Lb 14).